The following is a 504-amino-acid chain: Acid phosphatase A (504 aa).

Residues 1–22 (MYTLLDILKGLPLLAVAAIASA) form the signal peptide. N84, N112, N168, N260, N415, N450, and N474 each carry an N-linked (GlcNAc...) asparagine glycan.

Belongs to the metallophosphoesterase superfamily. Purple acid phosphatase family. In terms of assembly, monomer.

It is found in the secreted. It carries out the reaction a phosphate monoester + H2O = an alcohol + phosphate. Its function is as follows. Acid phosphatase involved in the regulation of fungal phenotypic traits and virulence in C.parasitica. In Cryphonectria parasitica (strain ATCC 38755 / EP155), this protein is Acid phosphatase A.